A 563-amino-acid chain; its full sequence is Forkhead box protein O (563 aa).

Disordered regions lie at residues 1–72 (MDDF…DPQQ) and 177–243 (KSVR…SYQL). Phosphothreonine; by PKB/AKT1 is present on Thr-43. Residues 58-72 (TKASNQQLANGDPQQ) are compositionally biased toward polar residues. Positions 90 to 196 (WGNLSYADLI…ETSRYEKRRG (107 aa)) form a DNA-binding region, fork-head. Position 185 is a phosphoserine; by PKB/AKT1 (Ser-185). The segment covering 216 to 225 (ATPSPSSSVS) has biased composition (polar residues). Residue Ser-253 is modified to Phosphoserine; by PKB/AKT1. Phosphoserine is present on residues Ser-256, Ser-257, and Ser-262. Residues 317–371 (AASGLPTQPPPPYQPPQHPQHTQGYALNGPGLSPNSVTTTMSPAYPNSEPSSDSL) are disordered. A compositionally biased stretch (pro residues) spans 323 to 334 (TQPPPPYQPPQH). The span at 349-358 (SPNSVTTTMS) shows a compositional bias: polar residues.

As to quaternary structure, interacts with melt.

It localises to the cytoplasm. It is found in the nucleus. Functionally, transcription factor involved in the regulation of the insulin signaling pathway. Consistently activates both the downstream target Thor\d4EBP and the feedback control target InR. Involved in negative regulation of the cell cycle, modulating cell growth and proliferation. In response to cellular stresses, such as nutrient deprivation or increased levels of reactive oxygen species, foxo is activated and inhibits growth through the action of target genes such as Thor. Foxo activated in the adult fat body can regulate lifespan in adults; an insulin peptide itself may function as one secondary messenger of insulin-regulated aging. Also regulates Lip4, homolog of human acid lipases, thereby acting as a key modulator of lipid metabolism by insulin signaling and integrates insulin responses to glucose and lipid homeostasis. In Drosophila mojavensis (Fruit fly), this protein is Forkhead box protein O.